We begin with the raw amino-acid sequence, 168 residues long: Mesencephalic astrocyte-derived neurotrophic factor homolog (168 aa).

An N-terminal signal peptide occupies residues 1 to 17 (MSRLVLLISLVIVVASA). 4 disulfide bridges follow: Cys-22-Cys-109, Cys-25-Cys-97, Cys-55-Cys-66, and Cys-143-Cys-146.

It belongs to the ARMET family. As to expression, expressed in the intestine, spermatheca and nervous system. Expressed in the hypoderm. Expressed in structures of the excretory system. Not expressed in the male gonad.

Its subcellular location is the secreted. It localises to the endoplasmic reticulum lumen. Functionally, inhibits endoplasmic reticulum (ER) stress response. Retained in the ER under normal conditions and is up-regulated and secreted by the ER in response to ER stress and hypoxia. Following secretion by the ER, directly binds to 3-O-sulfogalactosylceramide, a lipid sulfatide in the outer cell membrane of target cells. Sulfatide binding promotes its cellular uptake by endocytosis, and is required for its role in alleviating ER stress under ER stress conditions. Has a neuroprotective role, ensuring survival of dopaminergic neurons during normal growth. This is Mesencephalic astrocyte-derived neurotrophic factor homolog from Caenorhabditis elegans.